A 549-amino-acid polypeptide reads, in one-letter code: CTP synthase (549 aa).

The segment at 1–267 (MAKFVFITGG…CREVLDVLQL (267 aa)) is amidoligase domain. Serine 13 serves as a coordination point for CTP. Serine 13 lines the UTP pocket. ATP-binding positions include 14 to 19 (SIGKGI) and aspartate 71. The Mg(2+) site is built by aspartate 71 and glutamate 141. Residues 148–150 (DIE), 188–193 (KTKPTQ), and lysine 224 contribute to the CTP site. Residues 188–193 (KTKPTQ) and lysine 224 each bind UTP. One can recognise a Glutamine amidotransferase type-1 domain in the interval 292–534 (KVALVGKYVQ…IEAAQQRLPD (243 aa)). An L-glutamine-binding site is contributed by glycine 354. Cysteine 381 acts as the Nucleophile; for glutamine hydrolysis in catalysis. Residues 382 to 385 (LGMQ), glutamate 405, and arginine 462 each bind L-glutamine. Residues histidine 507 and glutamate 509 contribute to the active site.

This sequence belongs to the CTP synthase family. Homotetramer.

It carries out the reaction UTP + L-glutamine + ATP + H2O = CTP + L-glutamate + ADP + phosphate + 2 H(+). The enzyme catalyses L-glutamine + H2O = L-glutamate + NH4(+). The catalysed reaction is UTP + NH4(+) + ATP = CTP + ADP + phosphate + 2 H(+). It participates in pyrimidine metabolism; CTP biosynthesis via de novo pathway; CTP from UDP: step 2/2. Allosterically activated by GTP, when glutamine is the substrate; GTP has no effect on the reaction when ammonia is the substrate. The allosteric effector GTP functions by stabilizing the protein conformation that binds the tetrahedral intermediate(s) formed during glutamine hydrolysis. Inhibited by the product CTP, via allosteric rather than competitive inhibition. Catalyzes the ATP-dependent amination of UTP to CTP with either L-glutamine or ammonia as the source of nitrogen. Regulates intracellular CTP levels through interactions with the four ribonucleotide triphosphates. The chain is CTP synthase from Synechococcus sp. (strain CC9902).